The following is a 185-amino-acid chain: Putative manganese efflux pump MntP (185 aa).

The next 6 membrane-spanning stretches (helical) occupy residues 4–24, 36–56, 65–85, 105–125, 130–150, and 165–185; these read LTSSLIGIGLSMDCFAVALAI, ALVIAASFGIFQAGMTIAGWI, ISSYGSWIAFLLLAGIGIKMI, VILLSLATSIDAFAAGVSFGV, VLMPALAIGLVCFVVSCAGVF, and IFGGVILILIGIQILTDILPL.

It belongs to the MntP (TC 9.B.29) family.

It localises to the cell membrane. Functionally, probably functions as a manganese efflux pump. The protein is Putative manganese efflux pump MntP of Methanoregula boonei (strain DSM 21154 / JCM 14090 / 6A8).